A 353-amino-acid polypeptide reads, in one-letter code: 11-beta-hydroxysteroid dehydrogenase B (353 aa).

The helical; Signal-anchor for type II membrane protein transmembrane segment at leucine 10–proline 30 threads the bilayer. The Proline-knob motif lies at proline 13–alanine 26. Residues glycine 54 to arginine 80 and aspartate 105 each bind NADP(+). Substrate is bound at residue serine 184. Residue tyrosine 197 is the Proton acceptor of the active site. Residues tyrosine 197–lysine 201 and lysine 201 contribute to the NADP(+) site.

It belongs to the short-chain dehydrogenases/reductases (SDR) family. Expressed in seeds (at protein level).

Its subcellular location is the lipid droplet. The protein localises to the membrane. It carries out the reaction an 11beta-hydroxysteroid + NADP(+) = an 11-oxosteroid + NADPH + H(+). In terms of biological role, has dehydrogenase activity against 11 beta-hydroxysteroid and 17 beta-hydroxysteroid. May be involved in signal transduction regulated by various sterols. The chain is 11-beta-hydroxysteroid dehydrogenase B from Arachis hypogaea (Peanut).